The sequence spans 295 residues: Ethanolamine ammonia-lyase small subunit (295 aa).

Residues valine 207, glutamate 228, and cysteine 258 each coordinate adenosylcob(III)alamin.

It belongs to the EutC family. In terms of assembly, the basic unit is a heterodimer which dimerizes to form tetramers. The heterotetramers trimerize; 6 large subunits form a core ring with 6 small subunits projecting outwards. Adenosylcob(III)alamin is required as a cofactor.

It localises to the bacterial microcompartment. The enzyme catalyses ethanolamine = acetaldehyde + NH4(+). It participates in amine and polyamine degradation; ethanolamine degradation. Functionally, catalyzes the deamination of various vicinal amino-alcohols to oxo compounds. Allows this organism to utilize ethanolamine as the sole source of nitrogen and carbon in the presence of external vitamin B12. The sequence is that of Ethanolamine ammonia-lyase small subunit from Shigella sonnei (strain Ss046).